Reading from the N-terminus, the 483-residue chain is MISADLAILTPEIVLSLFAMAGLLGAVYTSKDALASAMCWGTAALFIIMAFYIGVTGNGAREAFDGMIIDDAFSRFAKITILLSAAAILMISQDYMAKADLLRFEFPVLIILAVVGMMIMVSAGDLIALYMGLELQSLALYVVAAMRRDSVRSTEAGLKYFVLGALSSGLLLYGSSLAYGFAGTTQFAGIIEAAQGGDMPLGLLFGLVFITAGLAFKVSAAPFHMWTPDVYEGSPTPITALFATAPKVAAMALFARVVHDAFGGVIGDWQQIVAFLAVVSMFLGAIAAIGQTDIKRLMAYSSISHMGFALMGLSAGTAQGVEAMLIYMAIYVAMNIGTFAFILTMERNGRHVTEISSLSAFASKEPTKALAILVMMFSLAGVPPLLGFFGKYAVLVAAVDAGLVWLAIAGVIASVIGAFYYIRIVYLMYFGEADEGALDGKMGLVPYVGLIAMALVIGLGWVPGVNLFGIEAPAETAAAMLIR.

A run of 13 helical transmembrane segments spans residues 7-27, 33-53, 76-96, 108-128, 161-181, 196-216, 235-255, 272-292, 297-317, 323-343, 369-389, 402-422, and 442-462; these read AILT…LGAV, ALAS…AFYI, FAKI…QDYM, VLII…DLIA, FVLG…AYGF, GGDM…GLAF, PTPI…ALFA, IVAF…IGQT, LMAY…SAGT, AMLI…AFIL, ALAI…LGFF, GLVW…FYYI, and MGLV…LGWV.

Belongs to the complex I subunit 2 family. NDH-1 is composed of 14 different subunits. Subunits NuoA, H, J, K, L, M, N constitute the membrane sector of the complex.

Its subcellular location is the cell inner membrane. It catalyses the reaction a quinone + NADH + 5 H(+)(in) = a quinol + NAD(+) + 4 H(+)(out). In terms of biological role, NDH-1 shuttles electrons from NADH, via FMN and iron-sulfur (Fe-S) centers, to quinones in the respiratory chain. The immediate electron acceptor for the enzyme in this species is believed to be ubiquinone. Couples the redox reaction to proton translocation (for every two electrons transferred, four hydrogen ions are translocated across the cytoplasmic membrane), and thus conserves the redox energy in a proton gradient. This chain is NADH-quinone oxidoreductase subunit N, found in Jannaschia sp. (strain CCS1).